We begin with the raw amino-acid sequence, 276 residues long: Dermonecrotic toxin LarSicTox-alphaIB2c (276 aa).

H5 is a catalytic residue. Mg(2+) contacts are provided by E25 and D27. The Nucleophile role is filled by H41. 2 disulfides stabilise this stretch: C45–C51 and C47–C190. Residue D85 coordinates Mg(2+). The N-linked (GlcNAc...) asparagine glycan is linked to N253.

This sequence belongs to the arthropod phospholipase D family. Class II subfamily. It depends on Mg(2+) as a cofactor. In terms of tissue distribution, expressed by the venom gland.

It localises to the secreted. It carries out the reaction an N-(acyl)-sphingosylphosphocholine = an N-(acyl)-sphingosyl-1,3-cyclic phosphate + choline. The catalysed reaction is an N-(acyl)-sphingosylphosphoethanolamine = an N-(acyl)-sphingosyl-1,3-cyclic phosphate + ethanolamine. It catalyses the reaction a 1-acyl-sn-glycero-3-phosphocholine = a 1-acyl-sn-glycero-2,3-cyclic phosphate + choline. The enzyme catalyses a 1-acyl-sn-glycero-3-phosphoethanolamine = a 1-acyl-sn-glycero-2,3-cyclic phosphate + ethanolamine. Dermonecrotic toxins cleave the phosphodiester linkage between the phosphate and headgroup of certain phospholipids (sphingolipid and lysolipid substrates), forming an alcohol (often choline) and a cyclic phosphate. This toxin acts on sphingomyelin (SM). It may also act on ceramide phosphoethanolamine (CPE), lysophosphatidylcholine (LPC) and lysophosphatidylethanolamine (LPE), but not on lysophosphatidylserine (LPS), and lysophosphatidylglycerol (LPG). It acts by transphosphatidylation, releasing exclusively cyclic phosphate products as second products. Induces dermonecrosis, hemolysis, increased vascular permeability, edema, inflammatory response, and platelet aggregation. The sequence is that of Dermonecrotic toxin LarSicTox-alphaIB2c from Loxosceles arizonica (Arizona brown spider).